The chain runs to 630 residues: Pentatricopeptide repeat-containing protein At2g03880, mitochondrial (630 aa).

A mitochondrion-targeting transit peptide spans 1–76; sequence MKSVMSKIKL…LIKCCISNRA (76 aa). PPR repeat units lie at residues 60 to 94, 95 to 125, 126 to 160, 161 to 192, 193 to 223, 224 to 258, 259 to 289, 292 to 322, 323 to 357, 358 to 388, and 394 to 424; these read DSAT…GHRP, MMFL…MPQR, NVIS…NVRP, NVYT…GLES, DVFV…MVTG, DAIV…GFIA, EQAT…IVKY, DLIL…MKER, DVIT…GTKP, NYIT…MKKL, and VREH…MECE. Positions 429–504 are type E motif; the sequence is TWRTLLGACR…EPGCSWIEVN (76 aa). The type E(+) motif stretch occupies residues 505–535; the sequence is KQIHAFIIGDNSHPQIVEVSKKLNQLIHRLT. The tract at residues 536–630 is type DYW motif; that stretch reads GIGYVPETNF…DGKCSCGDYW (95 aa).

It belongs to the PPR family. PCMP-H subfamily.

It localises to the mitochondrion. The protein is Pentatricopeptide repeat-containing protein At2g03880, mitochondrial (PCMP-H44) of Arabidopsis thaliana (Mouse-ear cress).